We begin with the raw amino-acid sequence, 429 residues long: Histidine--tRNA ligase (429 aa).

Belongs to the class-II aminoacyl-tRNA synthetase family. Homodimer.

The protein localises to the cytoplasm. It carries out the reaction tRNA(His) + L-histidine + ATP = L-histidyl-tRNA(His) + AMP + diphosphate + H(+). This chain is Histidine--tRNA ligase, found in Streptococcus pneumoniae (strain Hungary19A-6).